The chain runs to 84 residues: Acyl carrier protein homolog (84 aa).

The Carrier domain occupies 4–79 (HEILLKIKEI…DLVLEVKNLL (76 aa)). Residue Ser-39 is modified to O-(pantetheine 4'-phosphoryl)serine.

Post-translationally, 4'-phosphopantetheine is transferred from CoA to a specific serine of the apo-ACP-like protein.

It participates in lipid metabolism; fatty acid biosynthesis. Carrier of the growing fatty acid chain in fatty acid biosynthesis. This is Acyl carrier protein homolog from Mycoplasma genitalium (strain ATCC 33530 / DSM 19775 / NCTC 10195 / G37) (Mycoplasmoides genitalium).